A 355-amino-acid chain; its full sequence is Galectin-9 (355 aa).

Galectin domains follow at residues 17–148 (FSGT…ISFQ) and 227–355 (FITT…HVQT). A beta-D-galactoside is bound by residues Asn-48, His-61, Arg-65, Asn-75, 82-88 (WGPEERK), His-267, Arg-271, Thr-281, and 287-293 (WGSEERS).

As to quaternary structure, monomer. Peripheral blood leukocytes and lymphatic tissues. Expressed in lung, liver, breast and kidney with higher levels in tumor endothelial cells than normal endothelium (at protein level). Expressed in trophoblast cells in decidua and placenta in pregnancy (at protein level). Isoform 2 is the most abundant isoform expressed in endothelial cells. Upon endothelial cell activation isoform 2 expression decreases while expression of isoform 3 and isoform 5 increases. Isoform 4 decreases in pathological pregnancy.

It is found in the cytoplasm. It localises to the nucleus. Its subcellular location is the secreted. Functionally, binds galactosides. Has high affinity for the Forssman pentasaccharide. Ligand for HAVCR2/TIM3. Binding to HAVCR2 induces T-helper type 1 lymphocyte (Th1) death. Also stimulates bactericidal activity in infected macrophages by causing macrophage activation and IL1B secretion which restricts intracellular bacterial growth. Ligand for P4HB; the interaction retains P4HB at the cell surface of Th2 T-helper cells, increasing disulfide reductase activity at the plasma membrane, altering the plasma membrane redox state and enhancing cell migration. Ligand for CD44; the interaction enhances binding of SMAD3 to the FOXP3 promoter, leading to up-regulation of FOXP3 expression and increased induced regulatory T (iTreg) cell stability and suppressive function. Promotes ability of mesenchymal stromal cells to suppress T-cell proliferation. Expands regulatory T-cells and induces cytotoxic T-cell apoptosis following virus infection. Activates ERK1/2 phosphorylation inducing cytokine (IL-6, IL-8, IL-12) and chemokine (CCL2) production in mast and dendritic cells. Inhibits degranulation and induces apoptosis of mast cells. Induces maturation and migration of dendritic cells. Inhibits natural killer (NK) cell function. Can transform NK cell phenotype from peripheral to decidual during pregnancy. Astrocyte derived galectin-9 enhances microglial TNF production. May play a role in thymocyte-epithelial interactions relevant to the biology of the thymus. May provide the molecular basis for urate flux across cell membranes, allowing urate that is formed during purine metabolism to efflux from cells and serving as an electrogenic transporter that plays an important role in renal and gastrointestinal urate excretion. Highly selective to the anion urate. In terms of biological role, acts as an eosinophil chemoattractant. It also inhibits angiogenesis. Suppresses IFNG production by natural killer cells. This chain is Galectin-9 (LGALS9), found in Homo sapiens (Human).